We begin with the raw amino-acid sequence, 309 residues long: Foldase protein PrsA 2 (309 aa).

Positions M1 to A22 are cleaved as a signal peptide. C23 is lipidated: N-palmitoyl cysteine. Residue C23 is the site of S-diacylglycerol cysteine attachment. One can recognise a PpiC domain in the interval T146–K241.

The protein belongs to the PrsA family.

It localises to the cell membrane. The enzyme catalyses [protein]-peptidylproline (omega=180) = [protein]-peptidylproline (omega=0). In terms of biological role, plays a major role in protein secretion by helping the post-translocational extracellular folding of several secreted proteins. The chain is Foldase protein PrsA 2 (prsA2) from Streptococcus pyogenes serotype M1.